The sequence spans 363 residues: Aspartate carbamoyltransferase, chloroplastic (363 aa).

Residues M1–Q21 are disordered. The N-terminal 36 residues, M1 to A36, are a transit peptide targeting the chloroplast. Residues P11–Q21 are compositionally biased toward pro residues. Residues R109 and T110 each contribute to the carbamoyl phosphate site. 2 residues coordinate UMP: R109 and T110. K139 contributes to the L-aspartate binding site. Carbamoyl phosphate-binding residues include R160, H188, and Q191. R160 and H188 together coordinate UMP. UMP is bound by residues R221 and R283. L-aspartate contacts are provided by R221 and R283. Carbamoyl phosphate is bound by residues L323 and P324.

Belongs to the aspartate/ornithine carbamoyltransferase superfamily. ATCase family. As to quaternary structure, homotrimer.

It localises to the plastid. Its subcellular location is the chloroplast. It catalyses the reaction carbamoyl phosphate + L-aspartate = N-carbamoyl-L-aspartate + phosphate + H(+). It participates in pyrimidine metabolism; UMP biosynthesis via de novo pathway; (S)-dihydroorotate from bicarbonate: step 2/3. With respect to regulation, feedback inhibited by UMP. Functionally, catalyzes the condensation of carbamoyl phosphate and aspartate to form carbamoyl aspartate and inorganic phosphate, the committed step in the de novo pyrimidine nucleotide biosynthesis pathway. This is Aspartate carbamoyltransferase, chloroplastic (PYRB) from Oryza sativa subsp. japonica (Rice).